The following is a 659-amino-acid chain: MAEEKKETMEEPKIGVYVCHCGVNIGGVVDVEAVRDYAAKLPNVVIAKDYKYYCSDPGQLEIQKDIKELGINRVVVAACSPRLHEPTFRRCVEEAGLNQFLFEFANIREHDSWVHMDNPEGATEKAKDLVRMAVAKARLLEPLEASKVSVDDKALVIGGGVAGIQAALDLADMGFKTYMVEKRPSISGRMGQLDKTFPTLDCSMCILAPKMVDVGKHDNIELITYAEVKEVDGYIGNFKVKIEKKPRYIDEELCTGCGSCVEVCPIEMPNYFDEGIGMTKAVYIPFPQAVPLCATIDKDYCIECMLCDEVCERGAVKHDQEPEEIEIEVGTIIVATGYDAYDPTEKLEYGYGRHTNVITGLELERMINASGPTDGKVLKPSDGEKPKRVAFIHCVGSRDEQIGKPYCSRVCCMYIMKNAQLIKDKMPDTEVTLYYMDIRAFGKGFEEFYKRSQEKYGIKFIRGRPAEVIENPDLTLTVRSEDTLLGKVTEYDYDMVVLGVGLVPPEGAETLRQTIGLSKSADGFLMEAHPKLRPVDTLTDGVYLAGVAQGPKDIPDAVAQASGAAARAAIPMVKGEVEIEPIIAVTDSDVCGGCEVCIELCPFGAISIEEGHANVNVALCKGCGTCVAACPSGAMDQQHFKTEQIMAQIEAALNEPASK.

FAD is bound at residue 158–181; sequence GGGVAGIQAALDLADMGFKTYMVE. 4Fe-4S ferredoxin-type domains are found at residues 244-274, 292-321, 581-610, and 611-640; these read KKPR…YFDE, LCAT…HDQE, PIIA…SIEE, and GHAN…QQHF. The [4Fe-4S] cluster site is built by Cys254, Cys257, Cys260, Cys264, Cys301, Cys304, Cys307, Cys311, Cys591, Cys594, Cys597, Cys601, Cys620, Cys623, Cys626, and Cys630.

The protein belongs to the HdrA family. In terms of assembly, the heterodisulfide reductase is composed of three subunits; HdrA, HdrB and HdrC. It forms a complex with the F420-non-reducing hydrogenase (Mvh), which provides the reducing equivalents to the heterodisulfide reductase. [4Fe-4S] cluster serves as cofactor. The cofactor is FAD.

The catalysed reaction is coenzyme B + coenzyme M + 2 reduced [2Fe-2S]-[ferredoxin] + 2 H(+) = coenzyme M-coenzyme B heterodisulfide + 2 H2 + 2 oxidized [2Fe-2S]-[ferredoxin]. It functions in the pathway cofactor metabolism; coenzyme M-coenzyme B heterodisulfide reduction; coenzyme B and coenzyme M from coenzyme M-coenzyme B heterodisulfide: step 1/1. Its function is as follows. Part of a complex that catalyzes the reversible reduction of CoM-S-S-CoB to the thiol-coenzymes H-S-CoM (coenzyme M) and H-S-CoB (coenzyme B). In Methanothermobacter marburgensis (strain ATCC BAA-927 / DSM 2133 / JCM 14651 / NBRC 100331 / OCM 82 / Marburg) (Methanobacterium thermoautotrophicum), this protein is H(2):CoB-CoM heterodisulfide,ferredoxin reductase subunit A (hdrA).